A 366-amino-acid chain; its full sequence is Protein sigma-NS (366 aa).

The segment at 1–11 is important for ssRNA-binding and formation of complexes; the sequence is MASSLRAAISK.

This sequence belongs to the orthoreovirus sigma-NS protein family. In terms of assembly, homooligomer; in presence of RNA. Interacts with protein mu-NS; this interaction allows the localization of sigma-NS to the viral factories. Interacts with host G3BP1 (via C-terminus); this interaction induces the relocalization of G3BP1 and other SG proteins to the viral factories periphery.

The protein resides in the host cytoplasm. Protein that binds to ssRNA and participates with protein mu-NS in forming the matrix of viral factories, which are large inclusions in the host cytoplasm where replication intermediates are assembled and viral RNA replication takes place. Plays a role in the inhibition of the integrated stress response (ISR) to escape from host cell translational shutoff. Participates in the disruption of stress granules (SG) through its association with host G3BP1 and mu-NS. This chain is Protein sigma-NS (S3), found in Mammalia (T2J).